Consider the following 294-residue polypeptide: Halotolerance protein HAL1 (294 aa).

Positions Leu115 to Asn153 are disordered. Residues Ile125–Asn153 are compositionally biased toward polar residues. A Phosphoserine modification is found at Ser266.

It localises to the cytoplasm. Involved in salt tolerance. In Saccharomyces cerevisiae (strain ATCC 204508 / S288c) (Baker's yeast), this protein is Halotolerance protein HAL1 (HAL1).